The primary structure comprises 3420 residues: Adhesin BmaC autotransporter (3420 aa).

The signal sequence occupies residues 1–72 (MPNLANQDFT…SLVMAGTAAA (72 aa)). The Autotransporter domain maps to 3138 to 3420 (GPSGNNGIWA…AGSVGLRVRW (283 aa)).

Its subcellular location is the cell surface. The protein localises to the cell outer membrane. Its function is as follows. Fibronectin-binding protein, which is involved in adhesion to host cells and in the infective process. Mediates the binding of B.suis to the extracellular matrix and to non-phagocytic cells via cell-associated fibronectin. This Brucella suis biovar 1 (strain 1330) protein is Adhesin BmaC autotransporter.